A 141-amino-acid polypeptide reads, in one-letter code: HTH-type transcriptional regulator MntR (141 aa).

The region spanning 1–63 (MPTPSMEDYI…YEKYRGLVLT (63 aa)) is the HTH dtxR-type domain. Mn(2+) contacts are provided by Asp-8, Glu-11, His-77, Glu-99, Glu-102, and His-103.

This sequence belongs to the DtxR/MntR family. As to quaternary structure, homodimer.

It localises to the cytoplasm. DNA binding is strongly activated by Mn(2+). Its function is as follows. Central regulator of manganese homeostasis. In Geobacillus thermodenitrificans (strain NG80-2), this protein is HTH-type transcriptional regulator MntR.